A 410-amino-acid polypeptide reads, in one-letter code: MAAAGAEAPGAWCVPCLVSLDTLQELCRKEKLTCKSIGITKRNLNNYEVEYLCDYKVVKDMEYYLVKWKGWPDSTNTWEPLQNLKCPLLLQQFFNDKHNYLSQVKKGKAITLKENHRALKPAVAEYIVKKAKQRIALQRWQDELNRRKTHKGMIFVENTVDLEGPPSDFYYINEYKPAPGISLVNEATFGCSCTDCFFEKCCPAEAGVLLAYNKNQQIKIPPGTPIYECNSRCQCGPDCPNRIVQKGTQYSLCIFRTSNGCGWGVKTLVKIKRMSFVMEYVGEVITSEEAERRGQLYDNKGITYLFDLDYESDEFTVDAARYGNVSHFVNHSCDPNLQVFNVFIDNLDTRLPRIALFSTRTINAGEELTFDYQMKGSGDVSSDSIDHSPAKKRARTVCKCGAVTCRGYLN.

A Chromo domain is found at 47–105 (YEVEYLCDYKVVKDMEYYLVKWKGWPDSTNTWEPLQNLKCPLLLQQFFNDKHNYLSQVK). Residues 189-247 (FGCSCTDCFFEKCCPAEAGVLLAYNKNQQIKIPPGTPIYECNSRCQCGPDCPNRIVQKG) enclose the Pre-SET domain. Positions 191, 193, 196, 201, 202, 229, 233, 235, and 239 each coordinate Zn(2+). Positions 250–373 (YSLCIFRTSN…AGEELTFDYQ (124 aa)) constitute an SET domain. Residues 261–263 (CGW), tyrosine 304, and 330–331 (NH) each bind S-adenosyl-L-methionine. Zn(2+) is bound at residue cysteine 333. Residues serine 381, serine 384, and serine 388 each carry the phosphoserine modification. The Post-SET domain maps to 394–410 (ARTVCKCGAVTCRGYLN). Zn(2+)-binding residues include cysteine 398, cysteine 400, and cysteine 405.

It belongs to the class V-like SAM-binding methyltransferase superfamily. Histone-lysine methyltransferase family. Suvar3-9 subfamily. As to quaternary structure, interacts with SMAD5. The large PER complex involved in the histone methylation is composed of at least PER2, CBX3, TRIM28, SUV39H1 and/or SUV39H2; CBX3 mediates the formation of the complex. Post-translationally, ubiquitinated by the DCX(DCAF13) E3 ubiquitin ligase complex, leading to its degradation.

The protein resides in the nucleus. It localises to the chromosome. It is found in the centromere. It catalyses the reaction L-lysyl(9)-[histone H3] + 3 S-adenosyl-L-methionine = N(6),N(6),N(6)-trimethyl-L-lysyl(9)-[histone H3] + 3 S-adenosyl-L-homocysteine + 3 H(+). Histone methyltransferase that specifically trimethylates 'Lys-9' of histone H3 using monomethylated H3 'Lys-9' as substrate. H3 'Lys-9' trimethylation represents a specific tag for epigenetic transcriptional repression by recruiting HP1 (CBX1, CBX3 and/or CBX5) proteins to methylated histones. Mainly functions in heterochromatin regions, thereby playing a central role in the establishment of constitutive heterochromatin at pericentric and telomere regions. H3 'Lys-9' trimethylation is also required to direct DNA methylation at pericentric repeats. SUV39H1 is targeted to histone H3 via its interaction with RB1 and is involved in many processes, such as cell cycle regulation, transcriptional repression and regulation of telomere length. May participate in regulation of higher-order chromatin organization during spermatogenesis. Recruited by the large PER complex to the E-box elements of the circadian target genes such as PER2 itself or PER1, contributes to the conversion of local chromatin to a heterochromatin-like repressive state through H3 'Lys-9' trimethylation. The protein is Histone-lysine N-methyltransferase SUV39H2 (SUV39H2) of Bos taurus (Bovine).